We begin with the raw amino-acid sequence, 265 residues long: Ribosomal RNA large subunit methyltransferase E (265 aa).

Positions 83, 85, 106, 122, and 146 each coordinate S-adenosyl-L-methionine. The active-site Proton acceptor is K186. The disordered stretch occupies residues 230-265; the sequence is KGREAGPPSGGSERPVDVSKDLSARSDSEGPGDAEG. Basic and acidic residues predominate over residues 243 to 257; sequence RPVDVSKDLSARSDS.

Belongs to the class I-like SAM-binding methyltransferase superfamily. RNA methyltransferase RlmE family.

It localises to the cytoplasm. The catalysed reaction is uridine(2552) in 23S rRNA + S-adenosyl-L-methionine = 2'-O-methyluridine(2552) in 23S rRNA + S-adenosyl-L-homocysteine + H(+). Functionally, specifically methylates the uridine in position 2552 of 23S rRNA at the 2'-O position of the ribose in the fully assembled 50S ribosomal subunit. The chain is Ribosomal RNA large subunit methyltransferase E from Mesorhizobium japonicum (strain LMG 29417 / CECT 9101 / MAFF 303099) (Mesorhizobium loti (strain MAFF 303099)).